A 725-amino-acid chain; its full sequence is Eukaryotic elongation factor 2 kinase (725 aa).

Over residues 1–12 the composition is skewed to basic and acidic residues; it reads MADEDLIFRLEG. A disordered region spans residues 1–38; the sequence is MADEDLIFRLEGVDGGQSPRAGHDGDSDGDSDDEEGYF. Residue Ala2 is modified to N-acetylalanine. Residues Ser18 and Ser27 each carry the phosphoserine modification. Over residues 27–36 the composition is skewed to acidic residues; that stretch reads SDGDSDDEEG. A phosphoserine; by autocatalysis mark is found at Ser61 and Ser66. A phosphoserine mark is found at Ser70, Ser71, Ser72, and Ser74. A Phosphoserine; by autocatalysis and TRPM7 modification is found at Ser78. Positions 81-94 are calmodulin-binding; the sequence is FKEAWKHAIQKAKH. An Alpha-type protein kinase domain is found at 116 to 326; that stretch reads RYNAVTGEWL…ICESMGLAPF (211 aa). Ser243 carries the post-translational modification Phosphoserine. 296–302 is an ATP binding site; the sequence is GDGNLGV. Thr348 and Thr353 each carry phosphothreonine; by autocatalysis. 2 disordered regions span residues 352–405 and 423–477; these read GTEE…PHSQ and SRDH…SLGS. The residue at position 359 (Ser359) is a Phosphoserine; by MAPK13 and CDK1. Low complexity predominate over residues 363–377; sequence RTLSGSRPPLLRPLS. Residue Ser366 is modified to Phosphoserine; by autocatalysis, RPS6KA1 and RPS6KB1. Residues 386-404 show a composition bias toward polar residues; it reads SDVTFDSLPSSPSSATPHS. Ser392 is subject to Phosphoserine. Residue Ser398 is modified to Phosphoserine; by AMPK. Basic and acidic residues-rich tracts occupy residues 423–436 and 445–469; these read SRDH…RESE and SEKR…RKYE. Ser435 is modified (phosphoserine). Position 445 is a phosphoserine; by autocatalysis (Ser445). Phosphoserine is present on Ser470. Ser474 is subject to Phosphoserine; by autocatalysis. Ser477 is subject to Phosphoserine. Ser491 is modified (phosphoserine; by autocatalysis). A Phosphoserine; by PKA modification is found at Ser500.

The protein belongs to the protein kinase superfamily. Alpha-type protein kinase family. In terms of assembly, monomer or homodimer. Interacts with Calmodulin/CALM1; this interaction is strictly required for phosphorylation activity. Post-translationally, autophosphorylated at multiple residues, Thr-348 being the major site. Phosphorylated by AMP-activated protein kinase AMPK at Ser-398 leading to EEF2K activation and protein synthesis inhibition. Phosphorylated by TRPM7 at Ser-78 resulting in improved protein stability, higher EE2F phosphorylated and subsequently reduced rate of protein synthesis. Phosphorylation by other kinases such as CDK1 and MAPK13 at Ser-359 or RPS6KA1 and RPS6KB1 at Ser-366 instead decrease EEF2K activity and promote protein synthesis.

It carries out the reaction [translation elongation factor 2] + ATP = [translation elongation factor 2]-phosphate + ADP + H(+). Undergoes calcium/calmodulin-dependent intramolecular autophosphorylation, and this results in it becoming partially calcium/calmodulin-independent. Threonine kinase that regulates protein synthesis by controlling the rate of peptide chain elongation. Upon activation by a variety of upstream kinases including AMPK or TRPM7, phosphorylates the elongation factor EEF2 at a single site, renders it unable to bind ribosomes and thus inactive. In turn, the rate of protein synthesis is reduced. This Homo sapiens (Human) protein is Eukaryotic elongation factor 2 kinase (EEF2K).